A 1287-amino-acid chain; its full sequence is Vacuolating cytotoxin autotransporter (1287 aa).

The first 33 residues, 1–33 (MEIQQTHRKINRPLVSLALVGALVSITPQQSHA), serve as a signal peptide directing secretion. A disordered region spans residues 326-381 (PPEGGYKDKPNNTPSQSGAKNDKQESSQNNSNTQVINPPNSTQKTEVQPTQVIDGP). The span at 351 to 376 (SSQNNSNTQVINPPNSTQKTEVQPTQ) shows a compositional bias: polar residues. In terms of domain architecture, Autotransporter spans 1014-1287 (KYEKPTNVWA…ASNLGMRYSF (274 aa)).

Its subcellular location is the periplasm. It localises to the secreted. It is found in the cell surface. The protein resides in the cell outer membrane. In terms of biological role, induces vacuolation of eukaryotic cells. Causes ulceration and gastric lesions. This Helicobacter pylori (Campylobacter pylori) protein is Vacuolating cytotoxin autotransporter (vacA).